Here is a 445-residue protein sequence, read N- to C-terminus: Methionine aminopeptidase 2 (445 aa).

The disordered stretch occupies residues 1 to 80 (MAAQVASGVG…TSKVQTEPPR (80 aa)). Residues 57-71 (AKKKKKKTKKKKKGT) are compositionally biased toward basic residues. Residue His-195 coordinates substrate. A divalent metal cation is bound by residues Asp-215, Asp-226, and His-295. His-303 lines the substrate pocket. A divalent metal cation-binding residues include Glu-331 and Glu-426.

The protein belongs to the peptidase M24A family. Methionine aminopeptidase eukaryotic type 2 subfamily. Co(2+) serves as cofactor. It depends on Zn(2+) as a cofactor. Mn(2+) is required as a cofactor. Requires Fe(2+) as cofactor.

Its subcellular location is the cytoplasm. It carries out the reaction Release of N-terminal amino acids, preferentially methionine, from peptides and arylamides.. Functionally, cotranslationally removes the N-terminal methionine from nascent proteins. The N-terminal methionine is often cleaved when the second residue in the primary sequence is small and uncharged (Met-Ala-, Cys, Gly, Pro, Ser, Thr, or Val). The polypeptide is Methionine aminopeptidase 2 (Paracoccidioides brasiliensis (strain Pb18)).